The following is a 1395-amino-acid chain: Adventurous-gliding motility protein Z (1395 aa).

Positions R4–V122 constitute a Response regulatory domain. D48 carries the post-translational modification 4-aspartylphosphate. Disordered regions lie at residues L137 to E172, A874 to S893, E919 to H947, A1212 to Q1249, R1287 to E1312, and A1326 to K1395. Residues E213–A911 are a coiled coil. 2 stretches are compositionally biased toward basic and acidic residues: residues E919–K928 and Q1228–Q1249. 2 stretches are compositionally biased toward low complexity: residues K1291–A1306 and A1326–P1352. A compositionally biased stretch (acidic residues) spans E1382–K1395.

As to quaternary structure, interacts with MglA.

The protein localises to the cytoplasm. Functionally, required for adventurous-gliding motility (A motility), in response to environmental signals sensed by the frz chemosensory system. Forms ordered clusters that span the cell length and that remain stationary relative to the surface across which the cells move, serving as anchor points (focal, transient adhesion sites) that allow the bacterium to move forward. Clusters disassemble at the lagging cell pole. In Myxococcus xanthus (strain DK1622), this protein is Adventurous-gliding motility protein Z (aglZ).